The primary structure comprises 310 residues: Aspartate carbamoyltransferase catalytic subunit (310 aa).

Positions 54 and 55 each coordinate carbamoyl phosphate. Position 84 (K84) interacts with L-aspartate. Carbamoyl phosphate-binding residues include R105, H134, and Q137. L-aspartate is bound by residues R167 and R229. Carbamoyl phosphate-binding residues include L267 and P268.

The protein belongs to the aspartate/ornithine carbamoyltransferase superfamily. ATCase family. Heterododecamer (2C3:3R2) of six catalytic PyrB chains organized as two trimers (C3), and six regulatory PyrI chains organized as three dimers (R2).

It catalyses the reaction carbamoyl phosphate + L-aspartate = N-carbamoyl-L-aspartate + phosphate + H(+). It functions in the pathway pyrimidine metabolism; UMP biosynthesis via de novo pathway; (S)-dihydroorotate from bicarbonate: step 2/3. Its function is as follows. Catalyzes the condensation of carbamoyl phosphate and aspartate to form carbamoyl aspartate and inorganic phosphate, the committed step in the de novo pyrimidine nucleotide biosynthesis pathway. The sequence is that of Aspartate carbamoyltransferase catalytic subunit from Enterobacter sp. (strain 638).